The sequence spans 387 residues: Transcription termination/antitermination protein NusA (387 aa).

The 65-residue stretch at 145–209 (GQVLTGVVTR…AKGPSLLVSR (65 aa)) folds into the S1 motif domain. The region spanning 312 to 379 (AKKARVKVTK…ARERKAREEF (68 aa)) is the KH domain.

Belongs to the NusA family. As to quaternary structure, monomer. Binds directly to the core enzyme of the DNA-dependent RNA polymerase and to nascent RNA.

The protein localises to the cytoplasm. In terms of biological role, participates in both transcription termination and antitermination. This chain is Transcription termination/antitermination protein NusA, found in Thermus thermophilus (strain ATCC 27634 / DSM 579 / HB8).